The sequence spans 704 residues: MLGNQSADFSEKGEDEIVRQLCANGICMKTTEVEAKLDEGNIQEAESSLREGLSLNFEEARALLGRLEYQRGNLEGALRVFEGIDLQAAIQRLQVSVPLEKPATKKNRPREPQQSVSQHAANLVLEAIYLKAKSLQKLGRITEAAHECKSVLDSVEKIFQQGIPDAQVDNKLQETVSHAVELLPALWKESGDYQEAISAYRRALLSQWNLDNDCCARIQKDFAVFLLHSGVEASPPSLGSQIEGSYIPRNNIEEAILLLMILLKKFNLGKAKWDPSVFEHLTFALSLCSQTAVLAKQLEEVMPGVFSRIERWNTLALSYSAAGQNSAAVNLLRKSLHKHEQPDDLVALLLAAKLCSEEPSLAAEGTGYAQRAINNAQGMDEHLKGVGLRMLGLCLGKQAKVPTSDFERSRLQSESLKALDGAIAFEHNNPDLIFELGVQYAEQRNLKAASRYAKEFIDATGGSVLKGWRFLALVLSAQQRFSEAEVVTDAALDETAKWDQGPLLRLKAKLKISQSNPTEAVETYRYLLALVQAQRKSFGPLRTLSQMEEDKVNEFEVWHGLAYLYSSLSHWNDVEVCLKKAGELKQYSASMLHTEGRMWEGRKEFKPALAAFLDGLLLDGSSVPCKVAVGALLSERGKDHQPTLPVARSLLSDALRIDPTNRKAWYYLGMVHKSDGRIADATDCFQAASMLEESDPIESFSTIL.

TPR repeat units follow at residues 24 to 57 (NGIC…SLNF), 58 to 90 (EEAR…QAAI), 177 to 210 (SHAV…QWNL), 309 to 342 (IERW…HEQP), 430 to 463 (PDLI…TGGS), 555 to 588 (FEVW…KQYS), 589 to 622 (ASML…DGSS), and 662 to 695 (RKAW…EESD).

Interacts with calmodulin in a calcium-dependent manner. In terms of tissue distribution, expressed only in pollen and in pollen tubes.

In terms of biological role, calmodulin-binding protein essential for pollen germination, but not necessary for microsporogenesis or gametogenesis. The polypeptide is Protein NPG1 (Arabidopsis thaliana (Mouse-ear cress)).